The following is a 645-amino-acid chain: Cyclin-D-binding Myb-like transcription factor 1 (645 aa).

Disordered regions lie at residues 34–71 and 95–119; these read QNDG…STEY and RDEE…KKGE. 2 stretches are compositionally biased toward acidic residues: residues 36 to 46 and 95 to 105; these read DGEDLGSDETT and RDEELESDDLS. The Myb-like 1 domain occupies 219–257; sequence GKYTDEEINKLKELRQKHGNDWATIGSALGRSASSVKDR. The HTH myb-type domain maps to 262 to 327; it reads KDTCNTGKWT…KWLNYLNWKQ (66 aa). Positions 300 to 323 form a DNA-binding region, H-T-H motif; it reads WASVAELVGTRSEKQCRSKWLNYL. Residues 333–382 form the Myb-like 2 domain; the sequence is WTKEDDINLVRRIAELEVEDENEINWDILASGWSSVRSPQWLRSKWWTIK. Residues 568–645 are disordered; the sequence is VKEEPSENQT…ILENQEEGSN (78 aa). Over residues 587–597 the composition is skewed to basic and acidic residues; the sequence is EQSKQGEKTLD. A compositionally biased stretch (polar residues) spans 615-625; the sequence is IPTNEDISSDS.

This sequence belongs to the DMTF1 family.

It is found in the nucleus. Transcriptional activator which activates the CDKN2A/ARF locus in response to Ras-Raf signaling, thereby promoting p53/TP53-dependent growth arrest. Binds to the consensus sequence 5'-CCCG[GT]ATGT-3'. The polypeptide is Cyclin-D-binding Myb-like transcription factor 1 (dmtf1) (Danio rerio (Zebrafish)).